The following is a 359-amino-acid chain: F-box protein At5g49610 (359 aa).

The F-box domain maps to 3-52; the sequence is NQKGALFPDEVILQILARLPVKSLFRFKSVCKSWYRLPSDKYFTSLFNQL.

Part of a SCF (SKP1-cullin-F-box) protein ligase complex. Interacts with SKP1A, SKP1B, ASK11, ASK12, ASK13 and ASK14.

The protein operates within protein modification; protein ubiquitination. The chain is F-box protein At5g49610 from Arabidopsis thaliana (Mouse-ear cress).